The sequence spans 198 residues: Glycerol-3-phosphate acyltransferase (198 aa).

Helical transmembrane passes span 2–22 (YAVLTAIIAYLIGCINNAYIF), 48–70 (LGYKAAAPVFALDVLKGVIAVLI), 75–97 (MGNTGAMIAGIAVVCGHNWPVFL), 111–131 (VVMTVSPLLGLIALAIGVTVI), and 154–174 (IFWNSTQIFIFSLILASLAIF).

Belongs to the PlsY family. Probably interacts with PlsX.

It is found in the cell membrane. It catalyses the reaction an acyl phosphate + sn-glycerol 3-phosphate = a 1-acyl-sn-glycero-3-phosphate + phosphate. It functions in the pathway lipid metabolism; phospholipid metabolism. Catalyzes the transfer of an acyl group from acyl-phosphate (acyl-PO(4)) to glycerol-3-phosphate (G3P) to form lysophosphatidic acid (LPA). This enzyme utilizes acyl-phosphate as fatty acyl donor, but not acyl-CoA or acyl-ACP. The polypeptide is Glycerol-3-phosphate acyltransferase (Thermoanaerobacter sp. (strain X514)).